Here is a 375-residue protein sequence, read N- to C-terminus: Growth/differentiation factor 8 (375 aa).

The signal sequence occupies residues Met1–Leu23. A propeptide spanning residues Asp24–Arg266 is cleaved from the precursor. Asn71 is a glycosylation site (N-linked (GlcNAc...) asparagine). 4 cysteine pairs are disulfide-bonded: Cys272-Cys282, Cys281-Cys340, Cys309-Cys372, and Cys313-Cys374.

It belongs to the TGF-beta family. As to quaternary structure, homodimer; disulfide-linked.

The protein resides in the secreted. In terms of biological role, acts specifically as a negative regulator of skeletal muscle growth. This is Growth/differentiation factor 8 (MSTN) from Meleagris gallopavo (Wild turkey).